The sequence spans 911 residues: DNA polymerase I (911 aa).

A 5'-3' exonuclease domain is found at 186 to 280 (VTPAQYPDLA…DTLRLQPWDR (95 aa)). One can recognise a 3'-5' exonuclease domain in the interval 320-497 (RGGLLESGTV…LAAALDAELD (178 aa)).

This sequence belongs to the DNA polymerase type-A family. As to quaternary structure, single-chain monomer with multiple functions.

It catalyses the reaction DNA(n) + a 2'-deoxyribonucleoside 5'-triphosphate = DNA(n+1) + diphosphate. In terms of biological role, in addition to polymerase activity, this DNA polymerase exhibits 3'-5' and 5'-3' exonuclease activity. The polypeptide is DNA polymerase I (polA) (Mycobacterium leprae (strain TN)).